The sequence spans 234 residues: Lipoprotein-releasing system ATP-binding protein LolD (234 aa).

In terms of domain architecture, ABC transporter spans 7–233; it reads LQCINLCKRY…LQHHLTLVGA (227 aa). 43-50 is an ATP binding site; the sequence is GSSGSGKS.

This sequence belongs to the ABC transporter superfamily. Lipoprotein translocase (TC 3.A.1.125) family. In terms of assembly, the complex is composed of two ATP-binding proteins (LolD) and two transmembrane proteins (LolC and LolE).

The protein resides in the cell inner membrane. Its function is as follows. Part of the ABC transporter complex LolCDE involved in the translocation of mature outer membrane-directed lipoproteins, from the inner membrane to the periplasmic chaperone, LolA. Responsible for the formation of the LolA-lipoprotein complex in an ATP-dependent manner. The sequence is that of Lipoprotein-releasing system ATP-binding protein LolD from Yersinia pestis bv. Antiqua (strain Antiqua).